The following is an 85-amino-acid chain: Large ribosomal subunit protein bL27 (85 aa).

The interval 1 to 22 (MAHKKAGGSTNNGRDSESKRLG) is disordered.

Belongs to the bacterial ribosomal protein bL27 family.

The sequence is that of Large ribosomal subunit protein bL27 from Psychromonas ingrahamii (strain DSM 17664 / CCUG 51855 / 37).